The primary structure comprises 116 residues: U30-theraphotoxin-Cg1b (116 aa).

Positions 1 to 17 are cleaved as a signal peptide; sequence MKLCVLTIATLLVTATS. The propeptide occupies 18 to 53; that stretch reads LETQKEIAEGNELTREETPSLVEHKEDEAAAASEKR. The segment at 25–45 is disordered; sequence AEGNELTREETPSLVEHKEDE. 4 cysteine pairs are disulfide-bonded: Cys-55–Cys-69, Cys-62–Cys-75, Cys-66–Cys-112, and Cys-68–Cys-88.

This sequence belongs to the neurotoxin 03 (Tx2) family. 02 subfamily. In terms of tissue distribution, expressed by the venom gland.

The protein resides in the secreted. Probable ion channel inhibitor. The protein is U30-theraphotoxin-Cg1b of Chilobrachys guangxiensis (Chinese earth tiger tarantula).